Consider the following 602-residue polypeptide: Proteasome-associated ATPase (602 aa).

A compositionally biased stretch (basic and acidic residues) spans 1–13 (MQHDLPGGRHDEA). Positions 1-33 (MQHDLPGGRHDEADSSETGGAGTTENPSSEQAR) are disordered. The segment covering 23-32 (TTENPSSEQA) has biased composition (polar residues). The stretch at 28 to 103 (SSEQARQIRF…LREEVDRLAQ (76 aa)) forms a coiled coil. An ATP-binding site is contributed by 291–296 (GCGKTL). The interval 601–602 (YL) is docks into pockets in the proteasome alpha-ring.

Belongs to the AAA ATPase family. In terms of assembly, homohexamer. Assembles into a hexameric ring structure that caps the 20S proteasome core. Strongly interacts with the prokaryotic ubiquitin-like protein Pup through a hydrophobic interface; the interacting region of ARC lies in its N-terminal coiled-coil domain. There is one Pup binding site per ARC hexamer ring. Upon ATP-binding, the C-terminus of ARC interacts with the alpha-rings of the proteasome core, possibly by binding to the intersubunit pockets.

It participates in protein degradation; proteasomal Pup-dependent pathway. Its function is as follows. ATPase which is responsible for recognizing, binding, unfolding and translocation of pupylated proteins into the bacterial 20S proteasome core particle. May be essential for opening the gate of the 20S proteasome via an interaction with its C-terminus, thereby allowing substrate entry and access to the site of proteolysis. Thus, the C-termini of the proteasomal ATPase may function like a 'key in a lock' to induce gate opening and therefore regulate proteolysis. This Saccharomonospora viridis (strain ATCC 15386 / DSM 43017 / JCM 3036 / CCUG 5913 / NBRC 12207 / NCIMB 9602 / P101) (Thermoactinomyces viridis) protein is Proteasome-associated ATPase.